Reading from the N-terminus, the 384-residue chain is Glucose-fructose oxidoreductase domain-containing protein 2 (384 aa).

Residues M1–A25 form the signal peptide. Residues G358–L384 are disordered. The segment covering S372–L384 has biased composition (polar residues).

It belongs to the Gfo/Idh/MocA family.

The protein resides in the secreted. Its subcellular location is the extracellular space. It localises to the extracellular matrix. In terms of biological role, promotes matrix assembly. The sequence is that of Glucose-fructose oxidoreductase domain-containing protein 2 (gfod2) from Xenopus tropicalis (Western clawed frog).